The chain runs to 402 residues: Multidrug resistance protein MdtH (402 aa).

Over 1–12 (MSRVSQARNLGK) the chain is Cytoplasmic. Residues 13 to 33 (YFLLIDNMLVVLGFFVVFPLI) traverse the membrane as a helical segment. The Periplasmic segment spans residues 34–98 (SIRFVDQMGW…GFATMGIAHE (65 aa)). The helical transmembrane segment at 99-116 (PWLLWFSCFLSGLGGTLF) threads the bilayer. Topologically, residues 117 to 138 (DPPRSALVVKLIRPEQRGRFFS) are cytoplasmic. Residues 139–159 (LLMMQDSAGAVIGALLGSWLL) form a helical membrane-spanning segment. The Periplasmic portion of the chain corresponds to 160 to 164 (QYDFR). The helical transmembrane segment at 165-185 (LVCATGAILFILCALFNAWLL) threads the bilayer. The Cytoplasmic segment spans residues 186–213 (PAWKLSTVRTPVREGMRRVMSDKRFVTY). Residues 214-234 (VLTLAGYYMLAVQVMLMLPIM) form a helical membrane-spanning segment. Over 235-243 (VNDIAGSPA) the chain is Periplasmic. Residues 244-264 (AVKWMYAIEACLSLTLLYPIA) form a helical membrane-spanning segment. Topologically, residues 265–276 (RWSEKRFRLEHR) are cytoplasmic. A helical membrane pass occupies residues 277 to 297 (LMAGLLVMSLSMLPIGMVGNL). Residues 298–299 (QQ) lie on the Periplasmic side of the membrane. The chain crosses the membrane as a helical span at residues 300-320 (LFTLICAFYIGSVIAEPARET). Residues 321 to 339 (LSASLADARARGSYMGFSR) lie on the Cytoplasmic side of the membrane. A helical membrane pass occupies residues 340-360 (LGLAIGGAIGYIGGGWLFDMG). The Periplasmic segment spans residues 361–367 (KALAQPE). A helical transmembrane segment spans residues 368 to 388 (LPWMMLGIIGFITFLALGWQF). The Cytoplasmic segment spans residues 389–402 (SHKRTPRRMLEPGA).

Belongs to the major facilitator superfamily. DHA1 family. MdtH (TC 2.A.1.2.21) subfamily.

It is found in the cell inner membrane. This is Multidrug resistance protein MdtH from Salmonella agona (strain SL483).